A 312-amino-acid polypeptide reads, in one-letter code: HPr kinase/phosphorylase (312 aa).

Residues His-139 and Lys-160 contribute to the active site. 154 to 161 (GSSGVGKS) contributes to the ATP binding site. Position 161 (Ser-161) interacts with Mg(2+). Asp-178 (proton acceptor; for phosphorylation activity. Proton donor; for dephosphorylation activity) is an active-site residue. An important for the catalytic mechanism of both phosphorylation and dephosphorylation region spans residues 202-211 (LEIRGLGIIN). Glu-203 serves as a coordination point for Mg(2+). Arg-244 is an active-site residue. The tract at residues 265–270 (PVRPGR) is important for the catalytic mechanism of dephosphorylation.

The protein belongs to the HPrK/P family. As to quaternary structure, homohexamer. The cofactor is Mg(2+).

The catalysed reaction is [HPr protein]-L-serine + ATP = [HPr protein]-O-phospho-L-serine + ADP + H(+). It carries out the reaction [HPr protein]-O-phospho-L-serine + phosphate + H(+) = [HPr protein]-L-serine + diphosphate. In terms of biological role, catalyzes the ATP- as well as the pyrophosphate-dependent phosphorylation of a specific serine residue in HPr, a phosphocarrier protein of the phosphoenolpyruvate-dependent sugar phosphotransferase system (PTS). HprK/P also catalyzes the pyrophosphate-producing, inorganic phosphate-dependent dephosphorylation (phosphorolysis) of seryl-phosphorylated HPr (P-Ser-HPr). The two antagonistic activities of HprK/P are regulated by several intracellular metabolites, which change their concentration in response to the absence or presence of rapidly metabolisable carbon sources (glucose, fructose, etc.) in the growth medium. Therefore, by controlling the phosphorylation state of HPr, HPrK/P is a sensor enzyme that plays a major role in the regulation of carbon metabolism and sugar transport: it mediates carbon catabolite repression (CCR), and regulates PTS-catalyzed carbohydrate uptake and inducer exclusion. This is HPr kinase/phosphorylase from Listeria monocytogenes serotype 4b (strain CLIP80459).